We begin with the raw amino-acid sequence, 139 residues long: Diuretic hormone 41 (139 aa).

Residues 1–20 form the signal peptide; sequence MMWWALWCAVVVAAGSGVAA. Positions 21–79 are excised as a propeptide; that stretch reads APAPDSLSPLDMVQMDSSAPDDETLYAMSPMAARYSAGAPWLYLLADMPRDSQTGSGRV. Ile-122 is modified (isoleucine amide).

Belongs to the sauvagine/corticotropin-releasing factor/urotensin I family. In terms of tissue distribution, expressed in corpora cardiaca (CC), corpora allata (CA), antennal lobe (AL) and gnathal ganglion (GNG) (at protein level). Expression in CC and CA detected in all animals, in GNG in most animals, expression in AL detected in few animals (at protein level).

The protein localises to the secreted. Regulation of fluid secretion. In Agrotis ipsilon (Black cutworm moth), this protein is Diuretic hormone 41.